Reading from the N-terminus, the 219-residue chain is Guanylate kinase (219 aa).

The Guanylate kinase-like domain maps to 15–194 (GLMFVLSSPS…AFAEVQSILK (180 aa)). 22–29 (SPSGAGKT) serves as a coordination point for ATP.

It belongs to the guanylate kinase family.

It localises to the cytoplasm. The catalysed reaction is GMP + ATP = GDP + ADP. Essential for recycling GMP and indirectly, cGMP. This Nitrobacter hamburgensis (strain DSM 10229 / NCIMB 13809 / X14) protein is Guanylate kinase.